The primary structure comprises 412 residues: NF-kappa-B essential modulator (412 aa).

Residues 1–48 (MNKHPWKNQLSEMVQPSGGPAEDQDMLGEESSLGKPAMLHLPSEQGTP) form a disordered region. Residues 1 to 197 (MNKHPWKNQL…REVLQQQHSV (197 aa)) form a required for interaction with and ubiquitination by MARCHF2 region. Ser-31 and Ser-43 each carry phosphoserine; by IKKB. The interaction with CHUK/IKBKB stretch occupies residues 44 to 111 (EQGTPETLQR…KLVERLSLEK (68 aa)). Residues 49-345 (ETLQRCLEEN…LKVGCHESAR (297 aa)) adopt a coiled-coil conformation. Phosphoserine is present on Ser-68. Ser-85 is modified (phosphoserine; by ATM). Glycyl lysine isopeptide (Lys-Gly) (interchain with G-Cter in ubiquitin) cross-links involve residues Lys-111, Lys-139, Lys-143, Lys-226, and Lys-246. Residues 150 to 250 (LGELQESQSR…YDSHIKSSKG (101 aa)) form an interaction with TANK region. The segment at 242-343 (DSHIKSSKGM…NKLKVGCHES (102 aa)) is ubiquitin-binding (UBAN). Positions 246-358 (KSSKGMQLED…MRKRHVETPQ (113 aa)) are self-association. Residues 249–412 (KGMQLEDLRQ…LQIHVMECIE (164 aa)) are required for interaction with TNFAIP3. The tract at residues 250–339 (GMQLEDLRQQ…QREFNKLKVG (90 aa)) is linear polyubiquitin-binding, does not bind to 'Lys-63'-linked polyubiquitin. A Glycyl lysine isopeptide (Lys-Gly) (interchain with G-Cter in SUMO); alternate cross-link involves residue Lys-270. Residue Lys-270 forms a Glycyl lysine isopeptide (Lys-Gly) (interchain with G-Cter in ubiquitin); alternate linkage. Residues Lys-276, Lys-278, Lys-285, and Lys-295 each participate in a glycyl lysine isopeptide (Lys-Gly) (interchain with G-Cter in ubiquitin) cross-link. Lys-302 is covalently cross-linked (Glycyl lysine isopeptide (Lys-Gly) (interchain with G-Cter in SUMO); alternate). Residue Lys-302 forms a Glycyl lysine isopeptide (Lys-Gly) (interchain with G-Cter in ubiquitin); alternate linkage. Residues Lys-314, Lys-318, and Lys-319 each participate in a glycyl lysine isopeptide (Lys-Gly) (interchain with G-Cter in ubiquitin) cross-link. The leucine-zipper stretch occupies residues 315–336 (LVEKKEYLQEQLEQLQREFNKL). Phosphoserine; by IKKB is present on Ser-369. The interaction with CYLD stretch occupies residues 375-412 (SNQRRSPPEEPPDFCCPKCQYQAPDMDTLQIHVMECIE). Ser-380 carries the phosphoserine modification. A CCHC NOA-type zinc finger spans residues 382 to 412 (PEEPPDFCCPKCQYQAPDMDTLQIHVMECIE). Residue Cys-390 coordinates Zn(2+). Lys-392 participates in a covalent cross-link: Glycyl lysine isopeptide (Lys-Gly) (interchain with G-Cter in ubiquitin). Residues Cys-393, His-406, and Cys-410 each contribute to the Zn(2+) site.

In terms of assembly, homodimer; disulfide-linked. Component of the I-kappa-B-kinase (IKK) core complex consisting of CHUK, IKBKB and IKBKG; probably four alpha/CHUK-beta/IKBKB dimers are associated with four gamma/IKBKG subunits. The IKK core complex seems to associate with regulatory or adapter proteins to form a IKK-signalosome holo-complex. The IKK complex associates with TERF2IP/RAP1, leading to promote IKK-mediated phosphorylation of RELA/p65. Part of a complex composed of NCOA2, NCOA3, CHUK/IKKA, IKBKB, IKBKG and CREBBP. Interacts with COPS3, CYLD, NALP2, TRPC4AP and PIDD1. Interacts with ATM; the complex is exported from the nucleus. Interacts with TRAF6. Interacts with IKBKE. Interacts with TANK; the interaction is enhanced by IKBKE and TBK1. Part of a ternary complex consisting of TANK, IKBKB and IKBKG. Interacts with ZFAND5. Interacts with RIPK2. Interacts with TNIP1 and TNFAIP3; TNIP1 facilitates the TNFAIP3-mediated de-ubiquitination of IKBKG. Interacts with TNFAIP3; the interaction is induced by TNF stimulation and by polyubiquitin. Binds (via UBAN region) polyubiquitin; binds both 'Lys-63'-linked and linear polyubiquitin, with higher affinity for linear ubiquitin. Interacts with NLRP10. Interacts with TANK; this interaction increases in response to DNA damage. Interacts with USP10; this interaction increases in response to DNA damage. Interacts with ZC3H12A; this interaction increases in response to DNA damage. Interacts with IFIT5; the interaction synergizes the recruitment of IKK to MAP3K7 and enhances IKK phosphorylation. Interacts with TRIM29; this interaction induces IKBKG/NEMO ubiquitination and proteolytic degradation. Interacts with TRIM13; this interaction leads to IKBKG/NEMO ubiquitination. Interacts with ARFIP2. Interacts with RIPK1. Interacts with (ubiquitinated) BCL10; interaction with polyubiquitinated BCL10 via both 'Lys-63'-linked and linear ubiquitin is required for TCR-induced NF-kappa-B activation. Interacts with MARCHF2; during the late stages of macrophage viral and bacterial infection; the interaction leads to ubiquitination and degradation of IKBKG/NEMO. Phosphorylation at Ser-68 attenuates aminoterminal homodimerization. Post-translationally, polyubiquitinated on Lys-278 via 'Lys-63'-linked ubiquitin; the ubiquitination is mediated downstream of NOD2 and RIPK2 and probably plays a role in signaling by facilitating interactions with ubiquitin domain-containing proteins and activates the NF-kappa-B pathway. Polyubiquitinated on Lys-278 and Lys-302 through 'Lys-63'-linked ubiquitin; the ubiquitination is mediated by BCL10, MALT1 and TRAF6 and probably plays a role in signaling by facilitating interactions with ubiquitin domain-containing proteins and activates the NF-kappa-B pathway. Monoubiquitinated on Lys-270 and Lys-302; promotes nuclear export. Polyubiquitinated through 'Lys-27' by TRIM23; involved in antiviral innate and inflammatory responses. Linear polyubiquitinated on Lys-111, Lys-143, Lys-226, Lys-246, Lys-270, Lys-278, Lys-285, Lys-295, Lys-302 and Lys-319; the head-to-tail polyubiquitination is mediated by the LUBAC complex and plays a key role in NF-kappa-B activation. Deubiquitinated by USP10 in a TANK-dependent and -independent manner, leading to the negative regulation of NF-kappa-B signaling upon DNA damage. Ubiquitinated at Lys-319 by MARCHF2 following bacterial and viral infection which leads to its degradation. Polyubiquitinated via 'Lys-29'-linked ubiquitin; leading to lysosomal degradation. In terms of processing, sumoylated on Lys-270 and Lys-302 with SUMO1; the modification results in phosphorylation of Ser-85 by ATM leading to a replacement of the sumoylation by mono-ubiquitination on these residues. Neddylated by TRIM40, resulting in stabilization of NFKBIA and down-regulation of NF-kappa-B activity.

The protein localises to the cytoplasm. It localises to the nucleus. Its function is as follows. Regulatory subunit of the IKK core complex which phosphorylates inhibitors of NF-kappa-B thus leading to the dissociation of the inhibitor/NF-kappa-B complex and ultimately the degradation of the inhibitor. Its binding to scaffolding polyubiquitin plays a key role in IKK activation by multiple signaling receptor pathways. Can recognize and bind both 'Lys-63'-linked and linear polyubiquitin upon cell stimulation, with a much highr affinity for linear polyubiquitin. Could be implicated in NF-kappa-B-mediated protection from cytokine toxicity. Essential for viral activation of IRF3. Involved in TLR3- and IFIH1-mediated antiviral innate response; this function requires 'Lys-27'-linked polyubiquitination. The protein is NF-kappa-B essential modulator (Ikbkg) of Mus musculus (Mouse).